We begin with the raw amino-acid sequence, 483 residues long: MKAFHTFCVVLLVFGSVSEAKFDDFEDEEDIVEYDDNDFAEFEDVMEDSVTESPQRVITTEDDEDETTVELEGQDENQEGDFEDADTQEGDTESEPYDDEEFEGYEDKPDTSSSKNKDPITIVDVPAHLQNSWESYYLEILMVTGLLAYIMNYIIGKNKNSRLAQAWFNTHRELLESNFTLVGDDGTNKEATSTGKLNQENEHIYNLWCSGRVCCEGMLIQLRFLKRQDLLNVLARMMRPVSDQVQIKVTMNDEDMDTYVFAVGTRKALVRLQKEMQDLSEFCSDKPKSGAKYGLPDSLAILSEMGEVTDGMMDTKMVHFLTHYADKIESVHFSDQSSGPKIMQEEGQPLKLPDTKRTLLFTFNVPGSGNTYPKDMEALLPLMNMVIYSIDKAKKFRLNREGKQKADKNRARVEENFLKLTHVQRQEAAQSRREEKKRAEKERIMNEEDPEKQRRLEEAALRREQKKLEKKQMKMKQIKVKAM.

A signal peptide spans 1-20; sequence MKAFHTFCVVLLVFGSVSEA. Residues 21–135 lie on the Cytoplasmic side of the membrane; that stretch reads KFDDFEDEED…PAHLQNSWES (115 aa). The tract at residues 46–119 is disordered; it reads MEDSVTESPQ…DTSSSKNKDP (74 aa). Over residues 60 to 104 the composition is skewed to acidic residues; the sequence is TEDDEDETTVELEGQDENQEGDFEDADTQEGDTESEPYDDEEFEG. Over residues 105–118 the composition is skewed to basic and acidic residues; sequence YEDKPDTSSSKNKD. The chain crosses the membrane as a helical span at residues 136 to 155; it reads YYLEILMVTGLLAYIMNYII. Residues 156–483 are Lumenal-facing; sequence GKNKNSRLAQ…KMKQIKVKAM (328 aa). Residue Asn178 is glycosylated (N-linked (GlcNAc...) asparagine). Residues 424 to 483 are disordered; that stretch reads QRQEAAQSRREEKKRAEKERIMNEEDPEKQRRLEEAALRREQKKLEKKQMKMKQIKVKAM. The span at 430-472 shows a compositional bias: basic and acidic residues; sequence QSRREEKKRAEKERIMNEEDPEKQRRLEEAALRREQKKLEKKQ. The stretch at 450 to 483 forms a coiled coil; that stretch reads PEKQRRLEEAALRREQKKLEKKQMKMKQIKVKAM. The segment covering 473-483 has biased composition (basic residues); it reads MKMKQIKVKAM.

This sequence belongs to the CCDC47 family. In terms of assembly, component of the PAT complex, composed of WDR83OS/Asterix and CCDC47. The PAT complex is part of the multi-pass translocon (MPT) complex, composed of three subcomplexes, the GEL complex (composed of RAB5IF/OPTI and TMCO1), the BOS complex (composed of NCLN/Nicalin, NOMO1 and TMEM147) and the PAT complex (composed of WDR83OS/Asterix and CCDC47). The MPT complex associates with the SEC61 complex. Interacts with VCP, HSPA5, DERL1, DERL2 and SELENOS.

Its subcellular location is the endoplasmic reticulum membrane. The protein resides in the rough endoplasmic reticulum membrane. Its function is as follows. Component of the multi-pass translocon (MPT) complex that mediates insertion of multi-pass membrane proteins into the lipid bilayer of membranes. The MPT complex takes over after the SEC61 complex: following membrane insertion of the first few transmembrane segments of proteins by the SEC61 complex, the MPT complex occludes the lateral gate of the SEC61 complex to promote insertion of subsequent transmembrane regions. Within the MPT complex, the PAT subcomplex sequesters any highly polar regions in the transmembrane domains away from the non-polar membrane environment until they can be buried in the interior of the fully assembled protein. Within the PAT subcomplex, CCDC47 occludes the lateral gate of the SEC61 complex. Involved in the regulation of calcium ion homeostasis in the ER. Required for proper protein degradation via the ERAD (ER-associated degradation) pathway. Has an essential role in the maintenance of ER organization during embryogenesis. This chain is PAT complex subunit CCDC47 (CCDC47), found in Macaca fascicularis (Crab-eating macaque).